Reading from the N-terminus, the 1496-residue chain is Chromosome partition protein MukB (1496 aa).

Residue 63-70 (GGNGAGKS) coordinates ATP. Coiled coils occupy residues 328 to 493 (KLEL…QRLS) and 536 to 632 (KMQA…APAW). A flexible hinge region spans residues 694–811 (PDGSDDVRLN…EVPLFGRAAR (118 aa)). Coiled-coil stretches lie at residues 861-1171 (NPEE…SAEE) and 1235-1291 (IDAI…LQNI). A compositionally biased stretch (basic and acidic residues) spans 1082 to 1091 (RARSRRDELQ). Residues 1082-1101 (RARSRRDELQQRLSQQRSRK) form a disordered region.

It belongs to the SMC family. MukB subfamily. As to quaternary structure, homodimerization via its hinge domain. Binds to DNA via its C-terminal region. Interacts, and probably forms a ternary complex, with MukE and MukF via its C-terminal region. The complex formation is stimulated by calcium or magnesium. Interacts with tubulin-related protein FtsZ.

The protein localises to the cytoplasm. The protein resides in the nucleoid. Functionally, plays a central role in chromosome condensation, segregation and cell cycle progression. Functions as a homodimer, which is essential for chromosome partition. Involved in negative DNA supercoiling in vivo, and by this means organize and compact chromosomes. May achieve or facilitate chromosome segregation by condensation DNA from both sides of a centrally located replisome during cell division. The sequence is that of Chromosome partition protein MukB from Actinobacillus pleuropneumoniae serotype 7 (strain AP76).